A 117-amino-acid chain; its full sequence is Large ribosomal subunit protein uL18 (117 aa).

Belongs to the universal ribosomal protein uL18 family. In terms of assembly, part of the 50S ribosomal subunit; part of the 5S rRNA/L5/L18/L25 subcomplex. Contacts the 5S and 23S rRNAs.

In terms of biological role, this is one of the proteins that bind and probably mediate the attachment of the 5S RNA into the large ribosomal subunit, where it forms part of the central protuberance. The chain is Large ribosomal subunit protein uL18 from Photobacterium profundum (strain SS9).